The chain runs to 353 residues: Small ribosomal subunit biogenesis GTPase RsgA (353 aa).

The disordered stretch occupies residues methionine 1–threonine 24. Over residues glutamine 10–lysine 23 the composition is skewed to basic residues. In terms of domain architecture, CP-type G spans alanine 104–phenylalanine 274. GTP contacts are provided by residues asparagine 160–aspartate 163 and glycine 214–serine 222. Zn(2+) is bound by residues cysteine 298, cysteine 303, histidine 305, and cysteine 311.

This sequence belongs to the TRAFAC class YlqF/YawG GTPase family. RsgA subfamily. Monomer. Associates with 30S ribosomal subunit, binds 16S rRNA. Zn(2+) serves as cofactor.

The protein resides in the cytoplasm. One of several proteins that assist in the late maturation steps of the functional core of the 30S ribosomal subunit. Helps release RbfA from mature subunits. May play a role in the assembly of ribosomal proteins into the subunit. Circularly permuted GTPase that catalyzes slow GTP hydrolysis, GTPase activity is stimulated by the 30S ribosomal subunit. This chain is Small ribosomal subunit biogenesis GTPase RsgA, found in Klebsiella pneumoniae subsp. pneumoniae (strain ATCC 700721 / MGH 78578).